The primary structure comprises 692 residues: ATPase synthesis protein 25, mitochondrial (692 aa).

The N-terminal 73 residues, 1-73 (MNRILSKGPR…DGNGNTHRTT (73 aa)), are a transit peptide targeting the mitochondrion. Disordered stretches follow at residues 44-83 (PRLR…HTPW), 286-314 (RQVS…SSDH), and 338-373 (CRLL…HLAA). The segment covering 65–81 (GNGNTHRTTSTASSQHT) has biased composition (polar residues). Residues 292-302 (TKSDAPHEEVR) are compositionally biased toward basic and acidic residues. The span at 347 to 357 (DNQDDGLDDGL) shows a compositional bias: acidic residues.

It belongs to the ATP25 family.

Its subcellular location is the mitochondrion inner membrane. In terms of biological role, probable mitochondrial mRNA stabilization factor. The protein is ATPase synthesis protein 25, mitochondrial (atp25) of Neosartorya fischeri (strain ATCC 1020 / DSM 3700 / CBS 544.65 / FGSC A1164 / JCM 1740 / NRRL 181 / WB 181) (Aspergillus fischerianus).